Here is a 285-residue protein sequence, read N- to C-terminus: Methanethiol S-methyltransferase 1 (285 aa).

A run of 5 helical transmembrane segments spans residues 55–75, 88–108, 132–152, 162–182, and 224–244; these read AYLV…GLVV, AEAV…HSVM, LFAS…PTVI, VTLV…TFII, and FIVA…FAAV.

It belongs to the nurim family.

It is found in the membrane. The catalysed reaction is methanethiol + S-adenosyl-L-methionine = dimethyl sulfide + S-adenosyl-L-homocysteine + H(+). Catalyzes the methylation of methanethiol (MeSH) to yield dimethylsulphide (DMS). This Bradyrhizobium diazoefficiens (strain JCM 10833 / BCRC 13528 / IAM 13628 / NBRC 14792 / USDA 110) protein is Methanethiol S-methyltransferase 1.